The following is a 538-amino-acid chain: Phosphoenolpyruvate carboxykinase (ATP) (538 aa).

Positions 64, 205, and 211 each coordinate substrate. ATP-binding positions include lysine 211, histidine 230, and 246–254 (GLSGTGKTT). The Mn(2+) site is built by lysine 211 and histidine 230. Aspartate 267 lines the Mn(2+) pocket. Residues glutamate 295, arginine 331, 447 to 448 (RI), and threonine 453 contribute to the ATP site. Arginine 331 contacts substrate.

The protein belongs to the phosphoenolpyruvate carboxykinase (ATP) family. In terms of assembly, monomer. Mn(2+) serves as cofactor.

It localises to the cytoplasm. The catalysed reaction is oxaloacetate + ATP = phosphoenolpyruvate + ADP + CO2. It functions in the pathway carbohydrate biosynthesis; gluconeogenesis. Involved in the gluconeogenesis. Catalyzes the conversion of oxaloacetate (OAA) to phosphoenolpyruvate (PEP) through direct phosphoryl transfer between the nucleoside triphosphate and OAA. In Mannheimia succiniciproducens (strain KCTC 0769BP / MBEL55E), this protein is Phosphoenolpyruvate carboxykinase (ATP).